The sequence spans 510 residues: ATP synthase subunit alpha (510 aa).

169-176 (GDRQTGKT) serves as a coordination point for ATP.

Belongs to the ATPase alpha/beta chains family. F-type ATPases have 2 components, CF(1) - the catalytic core - and CF(0) - the membrane proton channel. CF(1) has five subunits: alpha(3), beta(3), gamma(1), delta(1), epsilon(1). CF(0) has three main subunits: a(1), b(2) and c(9-12). The alpha and beta chains form an alternating ring which encloses part of the gamma chain. CF(1) is attached to CF(0) by a central stalk formed by the gamma and epsilon chains, while a peripheral stalk is formed by the delta and b chains.

It is found in the cell inner membrane. The enzyme catalyses ATP + H2O + 4 H(+)(in) = ADP + phosphate + 5 H(+)(out). Functionally, produces ATP from ADP in the presence of a proton gradient across the membrane. The alpha chain is a regulatory subunit. The chain is ATP synthase subunit alpha from Rickettsia felis (strain ATCC VR-1525 / URRWXCal2) (Rickettsia azadi).